A 101-amino-acid polypeptide reads, in one-letter code: Small ribosomal subunit protein uS14A (101 aa).

Basic and acidic residues-rich tracts occupy residues 28-44 (KETIRRPSSSEDERAEA) and 61-70 (RNRDAADGRP). Residues 28 to 74 (KETIRRPSSSEDERAEARAALQRLPRDASPVRLRNRDAADGRPRGHL) form a disordered region.

The protein belongs to the universal ribosomal protein uS14 family. In terms of assembly, part of the 30S ribosomal subunit. Contacts proteins S3 and S10.

Binds 16S rRNA, required for the assembly of 30S particles and may also be responsible for determining the conformation of the 16S rRNA at the A site. This Rhodococcus jostii (strain RHA1) protein is Small ribosomal subunit protein uS14A.